Consider the following 745-residue polypeptide: Elongation factor G, mitochondrial (745 aa).

Residues 40–317 enclose the tr-type G domain; that stretch reads EKIRNIGISA…AVLDYLPNPG (278 aa). Residues 49–56, 116–120, and 170–173 each bind GTP; these read AHIDSGKT, DTPGH, and NKLD.

It belongs to the TRAFAC class translation factor GTPase superfamily. Classic translation factor GTPase family. EF-G/EF-2 subfamily.

It is found in the mitochondrion. It participates in protein biosynthesis; polypeptide chain elongation. In terms of biological role, mitochondrial GTPase that catalyzes the GTP-dependent ribosomal translocation step during translation elongation. During this step, the ribosome changes from the pre-translocational (PRE) to the post-translocational (POST) state as the newly formed A-site-bound peptidyl-tRNA and P-site-bound deacylated tRNA move to the P and E sites, respectively. Catalyzes the coordinated movement of the two tRNA molecules, the mRNA and conformational changes in the ribosome. Essential during development as it acts as a retrograde signal from mitochondria to the nucleus to slow down cell proliferation if mitochondrial energy output is low. This chain is Elongation factor G, mitochondrial, found in Drosophila willistoni (Fruit fly).